Consider the following 987-residue polypeptide: ATP-dependent 6-phosphofructokinase subunit alpha (987 aa).

Positions 1–580 (MQSQDSCYGV…LYENFLSTTV (580 aa)) are N-terminal catalytic PFK domain 1. The residue at position 3 (Ser-3) is a Phosphoserine. A Glycyl lysine isopeptide (Lys-Gly) (interchain with G-Cter in ubiquitin) cross-link involves residue Lys-89. Ser-166, Ser-179, Ser-185, Ser-189, and Ser-192 each carry phosphoserine. Gly-215 is a binding site for ATP. Ser-217 bears the Phosphoserine mark. ATP is bound by residues 278 to 279 (RS) and 308 to 311 (GDGS). Asp-309 contributes to the Mg(2+) binding site. Residues 354–356 (SID), Arg-391, and 398–400 (MGR) contribute to the beta-D-fructose 6-phosphate site. Asp-356 acts as the Proton acceptor in catalysis. Thr-450 carries the phosphothreonine modification. Beta-D-fructose 6-phosphate-binding positions include Glu-455, Lys-482, and 488–491 (HVQR). The tract at residues 581-594 (KDDGSELLPVSDRL) is interdomain linker. The interval 595 to 987 (NIGIVHVGAP…EVAALAAENK (393 aa)) is C-terminal regulatory PFK domain 2. Lys-625 is covalently cross-linked (Glycyl lysine isopeptide (Lys-Gly) (interchain with G-Cter in ubiquitin)). Beta-D-fructose 2,6-bisphosphate is bound by residues Arg-665, 722 to 726 (TVSNN), Arg-760, 767 to 769 (QGG), Glu-827, Arg-853, 859 to 862 (HVQQ), and Arg-952.

This sequence belongs to the phosphofructokinase type A (PFKA) family. ATP-dependent PFK group I subfamily. Eukaryotic two domain clade 'E' sub-subfamily. Heterooctamer of 4 alpha and 4 beta chains. Requires Mg(2+) as cofactor.

The protein resides in the cytoplasm. Its subcellular location is the mitochondrion outer membrane. The catalysed reaction is beta-D-fructose 6-phosphate + ATP = beta-D-fructose 1,6-bisphosphate + ADP + H(+). It participates in carbohydrate degradation; glycolysis; D-glyceraldehyde 3-phosphate and glycerone phosphate from D-glucose: step 3/4. Its activity is regulated as follows. Allosterically activated by ADP, AMP, or fructose 2,6-bisphosphate, and allosterically inhibited by ATP or citrate. In terms of biological role, catalyzes the phosphorylation of D-fructose 6-phosphate to fructose 1,6-bisphosphate by ATP, the first committing step of glycolysis. This Saccharomyces cerevisiae (strain ATCC 204508 / S288c) (Baker's yeast) protein is ATP-dependent 6-phosphofructokinase subunit alpha (PFK1).